The following is a 366-amino-acid chain: Ferredoxin--NADP reductase (366 aa).

The FAD site is built by Asp-51, Gln-59, Tyr-64, Val-104, Phe-139, Asp-308, and Thr-349.

Belongs to the ferredoxin--NADP reductase type 2 family. Homodimer. FAD is required as a cofactor.

It catalyses the reaction 2 reduced [2Fe-2S]-[ferredoxin] + NADP(+) + H(+) = 2 oxidized [2Fe-2S]-[ferredoxin] + NADPH. This is Ferredoxin--NADP reductase from Polaromonas naphthalenivorans (strain CJ2).